An 816-amino-acid polypeptide reads, in one-letter code: MASPALSHFLPRFGVAAAVAGVLSLTGCQTWNAQDTLPPTSGVQPLKGLAQNVSVRRNAMGMPLIESNSFHDALFALGYVHASDRINQMVTLRLLAQGRLAEMSGSSMLDADRYMRAVNLKKSAGELYKASSPRLKRFFEVYARGVNAYLFRYADKLPGDLASSGYKPEYWKPEDSALIFCLLNFSQSANLPEEIASLVLAQTVTNDKLAWLTPSAPDENLPLAEADKLQGIKLNGQIPGLTELSNASEQLAALNLLGTQSSNNWAIAPQRSRSGKSLLASDSHGPLAAPSLWSFVQIRAPKYQAAGVTVAGLPMVLGGFNGKVAWSLTSVLGDNQDLFLEKIRRQGSSLTYEVNGKWQPVAVRNETYFVKGQRPIREAVYETRHGALLNSTQAAAQGTGFGLALQTPSFTDDKSLDAFFDLSRAQNVERASDATREIRAIALNLVFADASNIGWQVTGRFPNRREGEGLLPSPGWEGRYDWDGYADPMLHPYDQDPAQGWLGTANQRVIPHGYGMQLSNSWAAPERGERLAELAGSGKHDSRSVIAMQYDQTTTFAAKLKKMFEAPGMAQPLKQAIDALPEAERSKAREAYTRLMAFDGKLSPTSADAAIYELFLQESMKQIFLDELGPQNSPAWKAFIANGDLSYAAQADHLLGREDSPFWDDARTPQKEDKPAILARSLAAAISAGDSQLGGDRRAWQWGKLHRYEWKNANGQSVRGPIAAGGDHTTLNTAAFAWGQDFNTTRAPSMRFIVDFGQSEPLMGQNGTGQSGNPVSPNYLNGIDPWLKGQYIGLPMQPQNFDRVYGKTRLTLTPGK.

The N-terminal stretch at 1 to 33 is a signal peptide; the sequence is MASPALSHFLPRFGVAAAVAGVLSLTGCQTWNA. Serine 262 acts as the Nucleophile in catalysis.

The protein belongs to the peptidase S45 family. Heterodimer of an alpha subunit and a beta subunit processed from the same precursor.

It localises to the periplasm. The catalysed reaction is an N-acyl-L-homoserine lactone + H2O = L-homoserine lactone + a carboxylate. Its function is as follows. Catalyzes the deacylation of acyl-homoserine lactone (AHL or acyl-HSL), releasing homoserine lactone (HSL) and the corresponding fatty acid. Possesses a specificity for the degradation of long-chain acyl-HSLs (side chains of seven or more carbons in length). The protein is Acyl-homoserine lactone acylase QuiP (quiP) of Pseudomonas fluorescens (strain Pf0-1).